Consider the following 501-residue polypeptide: UPF0288 protein Maeo_0995 (501 aa).

This sequence belongs to the UPF0288 family.

This chain is UPF0288 protein Maeo_0995, found in Methanococcus aeolicus (strain ATCC BAA-1280 / DSM 17508 / OCM 812 / Nankai-3).